The primary structure comprises 121 residues: Ig heavy chain V region MPC 11 (121 aa).

The Ig-like domain maps to 1-112; that stretch reads EAQLQQSGAE…NSSPYFDSWG (112 aa).

The protein is Ig heavy chain V region MPC 11 of Mus musculus (Mouse).